The sequence spans 243 residues: Anti-H(O) lectin 2 (243 aa).

Asn115 carries N-linked (GlcNAc...) asparagine glycosylation. Glu127 and Asp129 together coordinate Mn(2+). Residues Asp129, Asn136, and Asp139 each contribute to the Ca(2+) site. Asp139 and His144 together coordinate Mn(2+).

This sequence belongs to the leguminous lectin family. In terms of assembly, homodimer.

Functionally, lactose- or galactose-binding anti-H(O) lectin. The protein is Anti-H(O) lectin 2 of Cytisophyllum sessilifolium (Sessile-leaved cytisus).